A 428-amino-acid polypeptide reads, in one-letter code: RUN domain-containing protein 3A (428 aa).

Residues aspartate 52–glutamate 182 form the RUN domain. The stretch at glutamate 237–isoleucine 314 forms a coiled coil. Positions histidine 349–glycine 375 are disordered.

The protein belongs to the RUNDC3 family.

In Danio rerio (Zebrafish), this protein is RUN domain-containing protein 3A (rundc3a).